A 60-amino-acid chain; its full sequence is Large ribosomal subunit protein bL32 (60 aa).

Residues 1–60 (MAVQQNKKSPSKRGMHRSHNALTVPGIAVEPTTGETHMRHHISPNGFYRGRQVLKNKSEA) are disordered. Residues 9–19 (SPSKRGMHRSH) are compositionally biased toward basic residues.

This sequence belongs to the bacterial ribosomal protein bL32 family.

The chain is Large ribosomal subunit protein bL32 from Acidovorax ebreus (strain TPSY) (Diaphorobacter sp. (strain TPSY)).